Reading from the N-terminus, the 104-residue chain is Vacuolar ATPase assembly integral membrane protein VMA21 (104 aa).

Residues 1 to 21 (MSNRVSTGKMAMAPQESVQPA) lie on the Cytoplasmic side of the membrane. The chain crosses the membrane as a helical span at residues 22 to 42 (VLYKLVLFALLMAVVPIGTYF). The Lumenal segment spans residues 43 to 65 (STLNYLWDGASRCGFPSGLCSTT). Residues 66-86 (FAAISAIAAANLILVGYVVVA) form a helical membrane-spanning segment. The Cytoplasmic portion of the chain corresponds to 87-104 (FREDAASRTGPLPEKKTS). Residues 101–104 (KKTS) carry the Prevents secretion from ER motif.

It belongs to the VMA21 family.

The protein resides in the endoplasmic reticulum membrane. The protein localises to the endoplasmic reticulum-Golgi intermediate compartment membrane. Its subcellular location is the cytoplasmic vesicle. It is found in the COPII-coated vesicle membrane. Its function is as follows. Required for the assembly of the V0 complex of the vacuolar ATPase (V-ATPase) in the endoplasmic reticulum. This chain is Vacuolar ATPase assembly integral membrane protein VMA21, found in Cryptococcus neoformans var. neoformans serotype D (strain B-3501A) (Filobasidiella neoformans).